We begin with the raw amino-acid sequence, 370 residues long: Protein commissureless 1 (370 aa).

At 1–136 (MISTTDYPTV…DADMHVIINY (136 aa)) the chain is on the extracellular side. The required for vesicular localization stretch occupies residues 108-131 (LRDRSEESGESSWWSQIFGDADMH). A helical transmembrane segment spans residues 137–157 (LWIGVVSSLVILSLVFILFSC). Over 158–370 (YFYRKFRTWK…CASLVVVVAA (213 aa)) the chain is Cytoplasmic. 2 short sequence motifs (PY-motif) span residues 220–223 (PPCY) and 229–232 (LPSY). Residues 227-237 (TGLPSYDEALH) are interaction with Nedd4. Positions 287-312 (VEEDKADSSSSTSASASPSSSESSNL) are disordered. Low complexity predominate over residues 294-312 (SSSSTSASASPSSSESSNL).

The protein belongs to the commissureless family. Interacts (probably via PY-motifs) with Nedd4 (via WW2 domain). Interacts with Robo. Ubiquitinated by Nedd4; which promotes endocytosis of the comm/robo complex and comm proteasomal degradation. Not ubiquitinated by Nedd4.

It is found in the cytoplasmic vesicle membrane. The protein resides in the cell membrane. In terms of biological role, controls axon guidance across the CNS midline by preventing the delivery of Robo to the growth cone. The polypeptide is Protein commissureless 1 (Drosophila melanogaster (Fruit fly)).